The following is a 495-amino-acid chain: Glycerol kinase (495 aa).

Threonine 13 serves as a coordination point for ADP. Threonine 13, threonine 14, and serine 15 together coordinate ATP. Threonine 13 lines the sn-glycerol 3-phosphate pocket. Arginine 17 provides a ligand contact to ADP. Residues arginine 83, glutamate 84, tyrosine 135, and aspartate 244 each contribute to the sn-glycerol 3-phosphate site. Residues arginine 83, glutamate 84, tyrosine 135, aspartate 244, and glutamine 245 each contribute to the glycerol site. 2 residues coordinate ADP: threonine 266 and glycine 309. Residues threonine 266, glycine 309, glutamine 313, and glycine 410 each contribute to the ATP site. ADP contacts are provided by glycine 410 and asparagine 414.

This sequence belongs to the FGGY kinase family.

It catalyses the reaction glycerol + ATP = sn-glycerol 3-phosphate + ADP + H(+). It participates in polyol metabolism; glycerol degradation via glycerol kinase pathway; sn-glycerol 3-phosphate from glycerol: step 1/1. With respect to regulation, inhibited by fructose 1,6-bisphosphate (FBP). In terms of biological role, key enzyme in the regulation of glycerol uptake and metabolism. Catalyzes the phosphorylation of glycerol to yield sn-glycerol 3-phosphate. In Shewanella amazonensis (strain ATCC BAA-1098 / SB2B), this protein is Glycerol kinase.